The sequence spans 206 residues: Outer-membrane lipoprotein LolB (206 aa).

Positions 1 to 18 (MKTFKFFTALFATAILTA) are cleaved as a signal peptide. The N-palmitoyl cysteine moiety is linked to residue Cys-19. Residue Cys-19 is the site of S-diacylglycerol cysteine attachment.

The protein belongs to the LolB family. In terms of assembly, monomer.

Its subcellular location is the cell outer membrane. Functionally, plays a critical role in the incorporation of lipoproteins in the outer membrane after they are released by the LolA protein. The sequence is that of Outer-membrane lipoprotein LolB from Haemophilus influenzae (strain PittGG).